We begin with the raw amino-acid sequence, 468 residues long: Beta-monoglucosyldiacylglycerol synthase (468 aa).

4 consecutive transmembrane segments (helical) span residues 51–71 (AALVLTIVWSGTIALHLVSWG), 72–92 (SIFILGLTTVLGIHALGVVFA), 358–378 (MLMFMLTMYILPTAAIPDLLM), and 387–407 (MLGPVTGLSVTMSVVGMFAGL).

The protein belongs to the glycosyltransferase 2 family. The cofactor is Mg(2+).

The protein resides in the membrane. It carries out the reaction a 1,2-diacyl-sn-glycerol + UDP-alpha-D-glucose = a 1,2-diacyl-3-O-(beta-D-glucopyranosyl)-sn-glycerol + UDP + H(+). Its function is as follows. Glucosyltransferase involved in the biosynthesis of the non-bilayer-forming membrane lipid beta-monoglucosyldiacylglycerol which contributes to regulate the properties and stability of the membrane. Catalyzes the transfer of a glucosyl residue from UDP-Glc to diacylglycerol (DAG) acceptor to form the corresponding beta-glucosyl-DAG (1,2-diacyl-3-O-(beta-D-glucopyranosyl)-sn-glycerol). It can only use UDP-Glc as sugar donor. Two types of DAG (dipalmitoyl-DAG (DPDAG) and 1-oleoyl-2-palmitoyl-DAG (OPDAG)) can be used as sugar acceptors, but OPDAG is preferred. The chain is Beta-monoglucosyldiacylglycerol synthase from Nostoc sp. (strain PCC 7120 / SAG 25.82 / UTEX 2576).